A 131-amino-acid polypeptide reads, in one-letter code: Sirohydrochlorin cobaltochelatase (131 aa).

The active-site Proton acceptor is His-12. The Co(2+) site is built by His-12 and His-78. Residues His-12 and His-78 each coordinate Ni(2+). 73–78 (LASGVH) lines the substrate pocket.

Belongs to the CbiX family. CbiXS subfamily. As to quaternary structure, homotetramer; dimer of dimers.

It catalyses the reaction Co-sirohydrochlorin + 2 H(+) = sirohydrochlorin + Co(2+). The enzyme catalyses Ni-sirohydrochlorin + 2 H(+) = sirohydrochlorin + Ni(2+). It participates in cofactor biosynthesis; adenosylcobalamin biosynthesis; cob(II)yrinate a,c-diamide from sirohydrochlorin (anaerobic route): step 1/10. Catalyzes the insertion of Co(2+) into sirohydrochlorin as part of the anaerobic pathway to cobalamin biosynthesis. Involved in the biosynthesis of the unique nickel-containing tetrapyrrole coenzyme F430, the prosthetic group of methyl-coenzyme M reductase (MCR), which plays a key role in methanogenesis and anaerobic methane oxidation. Catalyzes the insertion of Ni(2+) into sirohydrochlorin to yield Ni-sirohydrochlorin. The protein is Sirohydrochlorin cobaltochelatase of Methanococcoides burtonii (strain DSM 6242 / NBRC 107633 / OCM 468 / ACE-M).